Consider the following 366-residue polypeptide: Protein RecA (366 aa).

81 to 88 contributes to the ATP binding site; sequence GPESSGKT.

The protein belongs to the RecA family.

The protein localises to the cytoplasm. In terms of biological role, can catalyze the hydrolysis of ATP in the presence of single-stranded DNA, the ATP-dependent uptake of single-stranded DNA by duplex DNA, and the ATP-dependent hybridization of homologous single-stranded DNAs. It interacts with LexA causing its activation and leading to its autocatalytic cleavage. In Leptospira interrogans serogroup Icterohaemorrhagiae serovar copenhageni (strain Fiocruz L1-130), this protein is Protein RecA.